The chain runs to 107 residues: uncharacterized protein (107 aa).

The HTH cro/C1-type domain occupies 13–68; sequence LQEEFLEPLSLKISDLAQILDVHRNTASNIVNNSSRITLEMAVKLAKVFDTTPEFW. The segment at residues 24–43 is a DNA-binding region (H-T-H motif); that stretch reads KISDLAQILDVHRNTASNIV.

It belongs to the VapA/VapI family.

This is an uncharacterized protein from Haemophilus influenzae (strain ATCC 51907 / DSM 11121 / KW20 / Rd).